We begin with the raw amino-acid sequence, 833 residues long: Major vault protein (833 aa).

MVP repeat units lie at residues 10-52 (RYYY…VSVP), 54-115 (RHYC…RKLQ), 119-170 (PNTG…TVIY), 171-223 (PNTA…TMLS), 224-278 (ELKA…VSLN), 280-328 (KEYV…LVVG), 329-380 (KEEA…MALD), and 381-433 (RNEG…SIKT).

As to quaternary structure, the vault ribonucleoprotein particle is a huge (400 A x 670 A) cage structure of 12.9 MDa. It consists of a dimer of half-vaults, with each half-vault comprising 39 identical major vault protein (MVP) chains, PARP4 and one or more vault RNAs (vRNAs).

Its subcellular location is the cytoplasm. It is found in the nucleus. Functionally, required for normal vault structure. Vaults are multi-subunit structures that may act as scaffolds for proteins involved in signal transduction. Vaults may also play a role in nucleo-cytoplasmic transport. In Leishmania braziliensis, this protein is Major vault protein.